A 94-amino-acid polypeptide reads, in one-letter code: MRKYETVFILNPTLDEEGYKANVEKFKGVIENAGGTVDNVDLWGKRKLAYEVKKVSEGYYTLMNFTADTELPKELDRVFRITDTVIRHMIITQE.

The protein belongs to the bacterial ribosomal protein bS6 family.

Binds together with bS18 to 16S ribosomal RNA. This chain is Small ribosomal subunit protein bS6, found in Clostridium botulinum (strain Hall / ATCC 3502 / NCTC 13319 / Type A).